The primary structure comprises 651 residues: Mediator of RNA polymerase II transcription subunit 17 (651 aa).

Residues 51-83 (QGSGSEEEEAAGTEGDAQEWPGAGSSADQDDEE) form a disordered region.

This sequence belongs to the Mediator complex subunit 17 family. As to quaternary structure, interacts with GATA1 and PPARG. Component of the Mediator complex, which is composed of MED1, MED4, MED6, MED7, MED8, MED9, MED10, MED11, MED12, MED13, MED13L, MED14, MED15, MED16, MED17, MED18, MED19, MED20, MED21, MED22, MED23, MED24, MED25, MED26, MED27, MED29, MED30, MED31, CCNC, CDK8 and CDC2L6/CDK11. The MED12, MED13, CCNC and CDK8 subunits form a distinct module termed the CDK8 module. Mediator containing the CDK8 module is less active than Mediator lacking this module in supporting transcriptional activation. Individual preparations of the Mediator complex lacking one or more distinct subunits have been variously termed ARC, CRSP, DRIP, PC2, SMCC and TRAP. Interacts with STAT2. Ubiquitous.

It localises to the nucleus. Its function is as follows. Component of the Mediator complex, a coactivator involved in the regulated transcription of nearly all RNA polymerase II-dependent genes. Mediator functions as a bridge to convey information from gene-specific regulatory proteins to the basal RNA polymerase II transcription machinery. Mediator is recruited to promoters by direct interactions with regulatory proteins and serves as a scaffold for the assembly of a functional preinitiation complex with RNA polymerase II and the general transcription factors. The protein is Mediator of RNA polymerase II transcription subunit 17 (MED17) of Homo sapiens (Human).